Reading from the N-terminus, the 1221-residue chain is DNA topoisomerase 2 (1221 aa).

ATP contacts are provided by residues N65, N94, 122 to 124 (SSN), 135 to 142 (GRHGYGAK), and 352 to 354 (QNK). A Toprim domain is found at 432-546 (RTLIVTEGDS…SLLVRNPGFI (115 aa)). Residues E438, D515, and D517 each contribute to the Mg(2+) site. Positions 681–1097 (LAHSVDGLKP…TPVQLWLGEL (417 aa)) constitute a Topo IIA-type catalytic domain. Y771 functions as the O-(5'-phospho-DNA)-tyrosine intermediate in the catalytic mechanism. Residues 952 to 961 (GLTQRIHING) form an interaction with DNA region. The interval 1158-1198 (VPPPTKRGAGGRSDGDGGATAAGAAAAVGGRGEKKGPGRAG) is disordered. The segment covering 1165 to 1177 (GAGGRSDGDGGAT) has biased composition (gly residues).

The protein belongs to the type II topoisomerase family. Homodimer. Mg(2+) is required as a cofactor. Requires Mn(2+) as cofactor. It depends on Ca(2+) as a cofactor.

It localises to the nucleus. It carries out the reaction ATP-dependent breakage, passage and rejoining of double-stranded DNA.. Control of topological states of DNA by transient breakage and subsequent rejoining of DNA strands. Topoisomerase II makes double-strand breaks. In Trypanosoma brucei brucei, this protein is DNA topoisomerase 2 (TOP2).